The sequence spans 904 residues: Copper-transporting ATPase ccc2 (904 aa).

Residues methionine 1–arginine 172 lie on the Cytoplasmic side of the membrane. The 67-residue stretch at tyrosine 2–serine 68 folds into the HMA domain. The Cu(+) site is built by cysteine 13 and cysteine 16. The helical transmembrane segment at phenylalanine 173–cysteine 193 threads the bilayer. The Lumenal, vesicle segment spans residues aspartate 194–arginine 197. A helical membrane pass occupies residues alanine 198–leucine 218. The Cytoplasmic segment spans residues serine 219–aspartate 246. A helical transmembrane segment spans residues valine 247 to tyrosine 267. The Lumenal, vesicle segment spans residues serine 268–isoleucine 278. A helical membrane pass occupies residues phenylalanine 279–leucine 296. Topologically, residues glutamate 297–alanine 431 are cytoplasmic. Residues glycine 432–phenylalanine 452 form a helical membrane-spanning segment. The Lumenal, vesicle segment spans residues threonine 453–lysine 469. The chain crosses the membrane as a helical span at residues phenylalanine 470–glycine 490. Topologically, residues leucine 491–cysteine 805 are cytoplasmic. Aspartate 529 serves as the catalytic 4-aspartylphosphate intermediate. Mg(2+) contacts are provided by aspartate 742 and aspartate 746. Residues isoleucine 806 to leucine 826 traverse the membrane as a helical segment. Over asparagine 827–proline 828 the chain is Lumenal, vesicle. A helical transmembrane segment spans residues methionine 829–leucine 849. The Cytoplasmic portion of the chain corresponds to arginine 850 to valine 904.

This sequence belongs to the cation transport ATPase (P-type) (TC 3.A.3) family. Type IB subfamily.

It is found in the golgi apparatus. It localises to the trans-Golgi network membrane. It catalyses the reaction Cu(+)(in) + ATP + H2O = Cu(+)(out) + ADP + phosphate + H(+). Its function is as follows. Probably involved in copper transport and in the regulation of cellular copper level. Retrieves copper from the metallochaperone atx1 and incorporates it into trans-Golgi vesicles. This chain is Copper-transporting ATPase ccc2 (ccc2), found in Schizosaccharomyces pombe (strain 972 / ATCC 24843) (Fission yeast).